We begin with the raw amino-acid sequence, 20 residues long: Unknown protein NF015 from 2D-PAGE (20 aa).

The segment at 1–20 (TPQIQKPAPQFSKTALLPDE) is disordered.

The polypeptide is Unknown protein NF015 from 2D-PAGE (Naegleria fowleri (Brain eating amoeba)).